A 1583-amino-acid polypeptide reads, in one-letter code: MEAGSVVRAIFDFCPSVSEELPLFVGDIIEVLAVVDEFWLLGKKEDVTGQFPSSFVEIVTIPSLKEGERLFVCISEFTSQELNSLPLHRGDLVILDDAPTASWLQGRSCWGARGFFPSSCVRELCLSSQSRRWHSQSALLQIPEYSMGQARALMGLSAQLDEELDFREGDVITIIGVPEPGWFEGELEGRRGIFPEGFVELLGPLRTVDELVSSGNHNDCIINGEEETPTGEEERGPEEDEEQPGTYGIALYRFQALEPNELDFEVGDKIRILGTLEDGWLEGSLKGRTGIFPYRFVKLFSKTRAEETMDLPKESSPTEIPDTSLDCRENPLVVEGRHKSPEYKAEKSNCVISETSASPLEHLTSECEVHKSSHQDEGTSRGPPRSPGWGHEQPLARHSPAEDPSETINGVSSQSQVPFRPRWQQNQYYSTTGRGHLSTEQYSDPLPLEAKAKDYSSRPPRGMYSPPKTFQKPVPSPHGSSCPLAPRVVRPSLLSSQLQSMVRGAKKYHTPKENASSFCSASERSEVKAGLQDRAFTADLIALGQGGGHTDLDSKLTQQLVEFEKSLSGPGAEPEAILRHFSIMNFNSEKDIVRGSSKSITPQELPERRRALRPPPPRPSTPASTSPHVLLDQNLKPEPPLAMRPSRPAPLPPSAQHRVTAVTPGLLTPGLFTHESCESPEKEGPENLDQTLDQTSQCPLVLVRIQEMEQDLDMCSPAPEEPNLTLEEKQDESLRAETPEDLEFYESNIESLNMELQQLREMTLLSSQSSSPVAPPGSMYTENPEQRMLEKRAKVIEELLQTERDYVRDLEMCIEHIMAPLQQTQIPNIDFEGLFGNMQMVIKVSKQLLADLEISDAVGPVFLDHRDELEGTYKVYCQNHDEAISLLEIYEKDEKIQKHLQDSLADLKSLYTEWGCTNYINLGSFLIKPVQRVMRYPLLLMELLNSTPESHPDKAPLTSAVLAVKEINVNINEYKRRKDLVLKYRKGDEDSLMEKISKLNIHSIIKKSNRVSSHLKHLTGFAPQIKDEAFEETEKNFRMQERLIKSFIRDLSLYLQHIRESACVKVVAAVSMWDVCMEKGHRDLEQFEKVHRYISDQLFTNFKERTERLVISPLNQLLSMFTGPHKLVQKRFDKLLDFYNCTERAEKLKDKKTLEELQSARNNYEALNAQLLDELPKFHQYAQGLFTNCIHGYAEAHCDFVRQALEQLKPLLSLLKVAGREGNLIAIFHEEHSRVLQQLQVFTFFPESLPAARKPFERKTLDRQSARKPLLGLPSYMLQSEELRASLLTRYPPEKLFQAERNFNAAQDLDVSLLEGDLVGVIKKKDPMGSQNRWLIDNGVSQGFVYSSFLKPYNTRRSHSDVSVGSHSSTESEQSSSSPRFPRQNSSGTLTFNPGSMAVSFTSGSCQKQPQDATSPKELGQEILSASSNLGCSESSPSRCPSDPDSSPQPRSWDSPEAARDISQPAPALRGYRNSRHPEIGGYSLPGRNGQGKDLTKGCARTTQALEDKNEEPESREAEGNQVYFAVYTFKARNPNELSVSANQRLKILEFKDVTGNTEWWLAEVNGKKGYVPSNYIRKAEYT.

Met-1 is subject to N-acetylmethionine. SH3 domains follow at residues 2 to 61 (EAGS…IVTI), 66 to 126 (EGER…ELCL), 145 to 204 (YSMG…LLGP), and 243 to 302 (QPGT…LFSK). 3 disordered regions span residues 217–244 (HNDC…EEQP), 306–329 (EETM…DCRE), and 366–464 (ECEV…RGMY). A compositionally biased stretch (acidic residues) spans 224-243 (GEEETPTGEEERGPEEDEEQ). Over residues 366-379 (ECEVHKSSHQDEGT) the composition is skewed to basic and acidic residues. The segment covering 406–442 (ETINGVSSQSQVPFRPRWQQNQYYSTTGRGHLSTEQY) has biased composition (polar residues). A Phosphoserine modification is found at Ser-495. Disordered regions lie at residues 594-656 (RGSS…PSAQ) and 671-693 (LFTH…QTLD). A compositionally biased stretch (pro residues) spans 637–653 (PEPPLAMRPSRPAPLPP). A compositionally biased stretch (basic and acidic residues) spans 675–685 (ESCESPEKEGP). A coiled-coil region spans residues 742–762 (LEFYESNIESLNMELQQLREM). The DH domain occupies 791–974 (KRAKVIEELL…KEINVNINEY (184 aa)). Residues 1015–1224 (LKHLTGFAPQ…LKVAGREGNL (210 aa)) form the BAR domain. An SH3 5 domain is found at 1292 to 1355 (PPEKLFQAER…YSSFLKPYNT (64 aa)). Residues 1357 to 1496 (RSHSDVSVGS…GRNGQGKDLT (140 aa)) are disordered. A compositionally biased stretch (low complexity) spans 1361–1387 (DVSVGSHSSTESEQSSSSPRFPRQNSS). Over residues 1388–1414 (GTLTFNPGSMAVSFTSGSCQKQPQDAT) the composition is skewed to polar residues. Over residues 1433–1456 (SESSPSRCPSDPDSSPQPRSWDSP) the composition is skewed to low complexity. Positions 1519-1582 (EGNQVYFAVY…PSNYIRKAEY (64 aa)) constitute an SH3 6 domain.

Binds DNM1 via its N-terminal SH3 domains. The C-terminal SH3 domain binds a complex containing actin, tubulin, Hsp70 and actin-regulatory proteins, such as ENAH, EVL, WIRE, CR16, WAVE1 and NAP1L1. Interacts with FASLG. Interacts (via SH3 domain 6) with WASL. Interacts (via SH3 domain 6) interacts with ENAH. Interacts (via C-terminal domain) with TJP1; required for the apical cell-cell junction localization of DNMBP.

It localises to the cytoplasm. The protein localises to the golgi apparatus. The protein resides in the golgi stack. Its subcellular location is the cytoskeleton. It is found in the synapse. It localises to the cell junction. Its function is as follows. Plays a critical role as a guanine nucleotide exchange factor (GEF) for CDC42 in several intracellular processes associated with the actin and microtubule cytoskeleton. Regulates the structure of apical junctions in epithelial cells. Participates in the normal lumenogenesis of epithelial cell cysts by regulating spindle orientation. Plays a key role in ciliogenesis and cyst formation. May play a role in membrane trafficking between the cell surface and the Golgi. The sequence is that of Dynamin-binding protein from Canis lupus familiaris (Dog).